A 462-amino-acid chain; its full sequence is Ribosomal protein uS12 methylthiotransferase RimO (462 aa).

The region spanning 22-133 (ASVAFLHLGC…IIEVLQRVRQ (112 aa)) is the MTTase N-terminal domain. Positions 31, 67, 96, 171, 175, and 178 each coordinate [4Fe-4S] cluster. Positions 157-386 (TTGRFVSYLK…VAIQQPISAA (230 aa)) constitute a Radical SAM core domain. Residues 389–460 (QALIGQTVDV…LYDLTGEINH (72 aa)) enclose the TRAM domain.

Belongs to the methylthiotransferase family. RimO subfamily. It depends on [4Fe-4S] cluster as a cofactor.

It is found in the cytoplasm. The enzyme catalyses L-aspartate(89)-[ribosomal protein uS12]-hydrogen + (sulfur carrier)-SH + AH2 + 2 S-adenosyl-L-methionine = 3-methylsulfanyl-L-aspartate(89)-[ribosomal protein uS12]-hydrogen + (sulfur carrier)-H + 5'-deoxyadenosine + L-methionine + A + S-adenosyl-L-homocysteine + 2 H(+). In terms of biological role, catalyzes the methylthiolation of an aspartic acid residue of ribosomal protein uS12. This Prochlorococcus marinus (strain MIT 9211) protein is Ribosomal protein uS12 methylthiotransferase RimO.